The following is an 826-amino-acid chain: Disintegrin and metalloproteinase domain-containing protein 8 (826 aa).

The first 16 residues, 1 to 16 (MLGLWLLSVLWTPAVA), serve as a signal peptide directing secretion. At 17-658 (PGPPLPHVKQ…VSDEQAASTS (642 aa)) the chain is on the extracellular side. N-linked (GlcNAc...) asparagine glycans are attached at residues Asn89 and Asn260. The 200-residue stretch at 196 to 395 (RYVELYVVAD…PQTGCLTNVP (200 aa)) folds into the Peptidase M12B domain. 12 disulfides stabilise this stretch: Cys305–Cys390, Cys346–Cys374, Cys348–Cys357, Cys430–Cys452, Cys443–Cys449, Cys461–Cys481, Cys468–Cys498, Cys493–Cys503, Cys563–Cys615, Cys615–Cys625, Cys619–Cys631, and Cys633–Cys642. A Zn(2+)-binding site is contributed by His329. Glu330 is an active-site residue. 2 residues coordinate Zn(2+): His333 and His339. In terms of domain architecture, Disintegrin spans 403–489 (GPVCGNLFVE…TCPEDAFQQN (87 aa)). N-linked (GlcNAc...) asparagine glycosylation is present at Asn431. An EGF-like domain is found at 611–643 (RSENCSAKCNNHGVCNHKRECHCHKGWAPPNCV). The N-linked (GlcNAc...) asparagine glycan is linked to Asn614. A helical membrane pass occupies residues 659–683 (LPVSVVVVLVILVAAMVIVAGIVIY). The Cytoplasmic portion of the chain corresponds to 684 to 826 (RKAPRQIQRR…VALKVPIQKR (143 aa)). A disordered region spans residues 701–826 (SGLSNPLFYT…VALKVPIQKR (126 aa)). A compositionally biased stretch (pro residues) spans 733-748 (PPRPIVKPKRPPPAPP). Over residues 749-763 (GAVSSSPLPVPVYAP) the composition is skewed to low complexity.

As to quaternary structure, interacts with FST3. Zn(2+) is required as a cofactor. Macrophages.

It localises to the membrane. In terms of biological role, possible involvement in extravasation of leukocytes. This chain is Disintegrin and metalloproteinase domain-containing protein 8 (Adam8), found in Mus musculus (Mouse).